The primary structure comprises 90 residues: UPF0184 protein (90 aa).

Residues 16 to 78 (DETKEEMVEL…QSLETEQNTE (63 aa)) are a coiled coil. The interval 57–90 (SQQARQELQAERQSLETEQNTEPSTKSDQEQKKQ) is disordered. The span at 81-90 (TKSDQEQKKQ) shows a compositional bias: basic and acidic residues.

The protein belongs to the UPF0184 (EST00098) family.

The polypeptide is UPF0184 protein (Branchiostoma floridae (Florida lancelet)).